A 350-amino-acid chain; its full sequence is Uroporphyrinogen decarboxylase (350 aa).

Substrate contacts are provided by residues 27–31 (RQAGR), F46, D76, Y152, S207, and H321.

It belongs to the uroporphyrinogen decarboxylase family. Homodimer.

It localises to the cytoplasm. It carries out the reaction uroporphyrinogen III + 4 H(+) = coproporphyrinogen III + 4 CO2. Its pathway is porphyrin-containing compound metabolism; protoporphyrin-IX biosynthesis; coproporphyrinogen-III from 5-aminolevulinate: step 4/4. Catalyzes the decarboxylation of four acetate groups of uroporphyrinogen-III to yield coproporphyrinogen-III. This is Uroporphyrinogen decarboxylase from Listeria monocytogenes serotype 4a (strain HCC23).